Here is a 100-residue protein sequence, read N- to C-terminus: NADH-quinone oxidoreductase subunit K (100 aa).

The next 3 membrane-spanning stretches (helical) occupy residues Met1–Gly21, Ile28–Ala48, and Phe64–Phe84.

The protein belongs to the complex I subunit 4L family. As to quaternary structure, NDH-1 is composed of 14 different subunits. Subunits NuoA, H, J, K, L, M, N constitute the membrane sector of the complex.

It is found in the cell inner membrane. It carries out the reaction a quinone + NADH + 5 H(+)(in) = a quinol + NAD(+) + 4 H(+)(out). Its function is as follows. NDH-1 shuttles electrons from NADH, via FMN and iron-sulfur (Fe-S) centers, to quinones in the respiratory chain. The immediate electron acceptor for the enzyme in this species is believed to be ubiquinone. Couples the redox reaction to proton translocation (for every two electrons transferred, four hydrogen ions are translocated across the cytoplasmic membrane), and thus conserves the redox energy in a proton gradient. In Helicobacter pylori (strain G27), this protein is NADH-quinone oxidoreductase subunit K.